Here is a 468-residue protein sequence, read N- to C-terminus: Glutamate--tRNA ligase 2 (468 aa).

Positions 9–19 (PSPTGFLHIGG) match the 'HIGH' region motif. The short motif at 238–242 (KLSKR) is the 'KMSKS' region element. Lysine 241 lines the ATP pocket.

This sequence belongs to the class-I aminoacyl-tRNA synthetase family. Glutamate--tRNA ligase type 1 subfamily. In terms of assembly, monomer.

The protein localises to the cytoplasm. The enzyme catalyses tRNA(Glu) + L-glutamate + ATP = L-glutamyl-tRNA(Glu) + AMP + diphosphate. Catalyzes the attachment of glutamate to tRNA(Glu) in a two-step reaction: glutamate is first activated by ATP to form Glu-AMP and then transferred to the acceptor end of tRNA(Glu). The sequence is that of Glutamate--tRNA ligase 2 from Rhodospirillum rubrum (strain ATCC 11170 / ATH 1.1.1 / DSM 467 / LMG 4362 / NCIMB 8255 / S1).